Consider the following 834-residue polypeptide: Arf-GAP with coiled-coil, ANK repeat and PH domain-containing protein 3 (834 aa).

Residues 268–363 (GVVMEGYLFK…WVQAVQASIA (96 aa)) enclose the PH domain. A disordered region spans residues 375–400 (SERLDRTASPSTSSIDSATDTRERGV). The span at 382 to 392 (ASPSTSSIDSA) shows a compositional bias: polar residues. Residues 403–525 (ESVLQRVQSV…KFLRKAPMAP (123 aa)) form the Arf-GAP domain. A C4-type zinc finger spans residues 418 to 441 (CGDCGQPDPRWASINLGVLLCIEC). Positions 633-653 (SVTEEEGAESEESSGEADGDT) are disordered. The span at 634 to 653 (VTEEEGAESEESSGEADGDT) shows a compositional bias: acidic residues. ANK repeat units follow at residues 702-731 (EGKT…DVNQ), 735-764 (RGRA…DQHA), and 768-797 (EQRD…AEEM).

Its function is as follows. GTPase-activating protein for the ADP ribosylation factor family. This Homo sapiens (Human) protein is Arf-GAP with coiled-coil, ANK repeat and PH domain-containing protein 3 (ACAP3).